We begin with the raw amino-acid sequence, 336 residues long: Potassium channel subfamily K member 1 (336 aa).

Residues 1–20 (MLQSLAGSSCVRLVERHRSA) are Cytoplasmic-facing. Residues 21–41 (WCFGFLVLGYLLYLVFGAVVF) form a helical membrane-spanning segment. Over 42–103 (SSVELPYEDL…SNASGNWNWD (62 aa)) the chain is Extracellular. An N-linked (GlcNAc...) asparagine glycan is attached at asparagine 95. The segment at residues 104–116 (FASALFFASTVLS) is an intramembrane region (helical). Residues 117-122 (TTGYGH) lie within the membrane without spanning it. Residues 117–122 (TTGYGH) form a selectivity filter 1 region. Topologically, residues 123-132 (TVPLSDGGKA) are extracellular. Residues 133–156 (FCIIYSVIGIPFTLLFLTAVVQRV) form a helical membrane-spanning segment. At 157 to 181 (TVHVTRRPVLYFHVRWGFSKQVVAI) the chain is on the cytoplasmic side. The chain crosses the membrane as a helical span at residues 182–202 (VHAVLLGLITVSCFFFIPAAV). Topologically, residues 203–211 (FSVLEDDWN) are extracellular. An intramembrane region (helical) is located at residues 212 to 224 (FLESFYFCFISLS). The interval 225–230 (TIGLGD) is selectivity filter 2. Residues 225–231 (TIGLGDY) lie within the membrane without spanning it. The Extracellular segment spans residues 232 to 243 (VPGEGYNQKFRE). The chain crosses the membrane as a helical span at residues 244–267 (LYKIGITCYLLLGLIAMLVVLETF). Residues 268–336 (CELHELKKFR…SACADGPANH (69 aa)) lie on the Cytoplasmic side of the membrane. A Glycyl lysine isopeptide (Lys-Gly) (interchain with G-Cter in SUMO) cross-link involves residue lysine 274. The segment at 293 to 299 (IIEHDQL) is important for intracellular retention in recycling endosomes. The segment at 315 to 336 (QKQNEPFVATPSSACADGPANH) is disordered. Serine 326 carries the post-translational modification Phosphoserine.

This sequence belongs to the two pore domain potassium channel (TC 1.A.1.8) family. Homodimer; disulfide-linked. Heterodimer with KCNK2; disulfide-linked. In astrocytes, forms mostly heterodimeric potassium channels with KCNK2, with only a minor proportion of functional channels containing homodimeric KCNK1. Interacts with KCNK3 and KCNK9, forming functional heterodimeric channels. Interacts with GNG4. Identified in a complex with PSD and ARF6; interacts only with PSD that is bound to ARF6. Interacts with UBE2I. In terms of processing, sumoylation is controversial. Sumoylated by UBE2I. Not sumoylated when expressed in xenopus oocytes or mammalian cells. Sumoylation inactivates the channel, but does not interfere with expression at the cell membrane. Sumoylation of a single subunit is sufficient to silence the dimeric channel. Sumoylation of KCNK1 is sufficient to silence heterodimeric channels formed by KCNK1 and KCNK3 or KCNK9. Desumoylated by SENP1; this activates the channel. Desumoylated by SENP1; this strongly increases halothane-mediated activation of heterodimeric channels formed with KCNK9. SENP1 treatment has no effect. In terms of tissue distribution, expressed in renal distal tubules, especially in cortical collecting duct and cortical thick ascending limb, with lower levels in the connecting tubule.

Its subcellular location is the cell membrane. The protein localises to the recycling endosome. It localises to the synaptic cell membrane. It is found in the cytoplasmic vesicle. The protein resides in the perikaryon. Its subcellular location is the cell projection. The protein localises to the dendrite. It localises to the apical cell membrane. The catalysed reaction is K(+)(in) = K(+)(out). The enzyme catalyses NH4(+)(in) = NH4(+)(out). It carries out the reaction Na(+)(in) = Na(+)(out). It catalyses the reaction Rb(+)(in) = Rb(+)(out). The catalysed reaction is Cs(+)(in) = Cs(+)(out). The enzyme catalyses Li(+)(in) = Li(+)(out). It carries out the reaction L-glutamate(out) = L-glutamate(in). It catalyses the reaction chloride(in) = chloride(out). Its function is as follows. Ion channel that contributes to passive transmembrane potassium transport and to the regulation of the resting membrane potential in brain astrocytes, but also in kidney and in other tissues. Forms dimeric channels through which potassium ions pass in accordance with their electrochemical gradient. The channel is selective for K(+) ions at physiological potassium concentrations and at neutral pH, but becomes permeable to Na(+) at subphysiological K(+) levels and upon acidification of the extracellular medium. The homodimer has very low potassium channel activity, when expressed in heterologous systems, and can function as weakly inward rectifying potassium channel. Channel activity is modulated by activation of serotonin receptors. Heterodimeric channels containing KCNK1 and KCNK2 have much higher activity, and may represent the predominant form in astrocytes. Heterodimeric channels containing KCNK1 and KCNK3 or KCNK9 have much higher activity. Heterodimeric channels formed by KCNK1 and KCNK9 may contribute to halothane-sensitive currents. Mediates outward rectifying potassium currents in dentate gyrus granule cells and contributes to the regulation of their resting membrane potential. Contributes to the regulation of action potential firing in dentate gyrus granule cells and down-regulates their intrinsic excitability. In astrocytes, the heterodimer formed by KCNK1 and KCNK2 is required for rapid glutamate release in response to activation of G-protein coupled receptors, such as F2R and CNR1. Required for normal ion and water transport in the kidney. Contributes to the regulation of the resting membrane potential of pancreatic beta cells. The low channel activity of homodimeric KCNK1 may be due to sumoylation. The low channel activity may be due to rapid internalization from the cell membrane and retention in recycling endosomes. Permeable to monovalent cations with ion selectivity for K(+) &gt; Rb(+) &gt;&gt; NH4(+) &gt;&gt; Cs(+) = Na(+) = Li(+). This is Potassium channel subfamily K member 1 from Oryctolagus cuniculus (Rabbit).